The primary structure comprises 193 residues: Selenate reductase assembly chaperone protein (193 aa).

The protein belongs to the type II DMSO reductase enzyme chaperone family.

It is found in the cytoplasm. Functionally, may function as a system-specific chaperone protein essential for the assembly of an active selenate reductase SerABC. The chain is Selenate reductase assembly chaperone protein from Thauera selenatis.